Here is a 278-residue protein sequence, read N- to C-terminus: Orotidine 5'-phosphate decarboxylase (278 aa).

The Proton donor role is filled by Lys95.

The protein belongs to the OMP decarboxylase family. Type 2 subfamily.

It carries out the reaction orotidine 5'-phosphate + H(+) = UMP + CO2. The protein operates within pyrimidine metabolism; UMP biosynthesis via de novo pathway; UMP from orotate: step 2/2. The protein is Orotidine 5'-phosphate decarboxylase of Mycobacterium ulcerans (strain Agy99).